A 299-amino-acid polypeptide reads, in one-letter code: 33 kDa chaperonin (299 aa).

2 cysteine pairs are disulfide-bonded: Cys238–Cys240 and Cys271–Cys274.

This sequence belongs to the HSP33 family. Post-translationally, under oxidizing conditions two disulfide bonds are formed involving the reactive cysteines. Under reducing conditions zinc is bound to the reactive cysteines and the protein is inactive.

The protein resides in the cytoplasm. Its function is as follows. Redox regulated molecular chaperone. Protects both thermally unfolding and oxidatively damaged proteins from irreversible aggregation. Plays an important role in the bacterial defense system toward oxidative stress. In Alkaliphilus oremlandii (strain OhILAs) (Clostridium oremlandii (strain OhILAs)), this protein is 33 kDa chaperonin.